The chain runs to 917 residues: ABC transporter A family member 12 (917 aa).

6 helical membrane-spanning segments follow: residues Leu-34–Ala-54, Ile-323–Ile-343, Phe-377–Leu-397, Phe-409–Ile-429, Thr-435–Phe-455, and Gly-508–Ile-528. The ABC transporter domain occupies Ile-595 to Thr-832. Gly-633 to Thr-640 is a binding site for ATP.

It belongs to the ABC transporter superfamily. ABCA family. CPR flippase (TC 3.A.1.211) subfamily.

The protein localises to the membrane. This is ABC transporter A family member 12 (ABCA12) from Arabidopsis thaliana (Mouse-ear cress).